An 806-amino-acid chain; its full sequence is Ent-atiserene synthase KSL4, chloroplastic (806 aa).

The transit peptide at 1-75 (MGIVALILIK…AKLFKKNEVC (75 aa)) directs the protein to the chloroplast. The tract at residues 33 to 56 (ASLAGSGLPKTTPPKTASLQSHSP) is disordered. Over residues 45 to 55 (PPKTASLQSHS) the composition is skewed to polar residues. Residues aspartate 556, aspartate 560, asparagine 700, and glutamate 708 each coordinate Mg(2+). Positions 556–560 (DDLFD) match the DDXXD motif motif.

This sequence belongs to the terpene synthase family. It depends on Mg(2+) as a cofactor. In terms of tissue distribution, highly expressed in leaves, and, at low levels, in roots, stems and flowers.

The protein resides in the plastid. It is found in the chloroplast. It catalyses the reaction ent-copalyl diphosphate = ent-atiserene + diphosphate. The protein operates within secondary metabolite biosynthesis; terpenoid biosynthesis. Functionally, involved in the biosynthesis of ent-kaurene diterpenoids natural products such as oridonin, miltiradiene, eriocalyxin B and nezukol, known to exhibit antitumor, anti-inflammatory and antibacterial activities. Catalyzes the conversion of ent-copalyl diphosphate (ent-CPP) to ent-atiserene. The polypeptide is Ent-atiserene synthase KSL4, chloroplastic (Isodon rubescens (Rabdosia rubescens)).